Here is a 339-residue protein sequence, read N- to C-terminus: MNEEYIEKFKEAKEKILRAQNLTELEEVKRVYLGKQGFLTQILRSIGKMPQEERAKWGRLANEWKEELESLYENKEKELKYLTLQKKLEEEKIDITLPGRRKILGRIHPINQVIEEIVMVFKEMGFQVVYGPELETDYYNFTALNIPMDHPVRESHDSFYIDKEHLLRTQTSPVQIRVMENKKPPLRVVAPGKCYRRDIPDATHSPMFHQIEGLVVDTDVTFAELKGVLTIFAHRLFGKDRKVYFIPSYFPFTEPSAEMYVECGVCKGAGCKACGYSGVLEILGCGMVHPQVFRIVGIDPEKYTGFAFGMGPDRIAMQIYGIDDIRLFYENDVRFLKQF.

Mg(2+) is bound at residue Glu-254.

It belongs to the class-II aminoacyl-tRNA synthetase family. Phe-tRNA synthetase alpha subunit type 1 subfamily. As to quaternary structure, tetramer of two alpha and two beta subunits. The cofactor is Mg(2+).

It localises to the cytoplasm. The catalysed reaction is tRNA(Phe) + L-phenylalanine + ATP = L-phenylalanyl-tRNA(Phe) + AMP + diphosphate + H(+). The polypeptide is Phenylalanine--tRNA ligase alpha subunit (Dictyoglomus turgidum (strain DSM 6724 / Z-1310)).